The following is a 510-amino-acid chain: uncharacterized protein (510 aa).

Disordered stretches follow at residues 1-154 (MGSP…ATFL), 208-227 (DGNH…GDLA), 234-276 (TRES…QGIL), and 368-480 (NFYT…GCPR). Position 43 is a phosphoserine (Ser43). Positions 50–60 (PLVSQQDTSEA) are enriched in polar residues. Positions 78-92 (EEERLGSPEDEKMDG) are enriched in basic and acidic residues. Residue Ser84 is modified to Phosphoserine. Composition is skewed to polar residues over residues 97-109 (SQPS…QVAN) and 118-135 (QPSS…SNRR). Ser120 is modified (phosphoserine). The span at 139–151 (ASGSEEAKAASAA) shows a compositional bias: low complexity. Positions 243-255 (SSLLTTTRGLTSG) are enriched in low complexity. The segment covering 379–395 (RTKELQLVAKEDTDSTR) has biased composition (basic and acidic residues). The span at 414 to 441 (SVHQEFSSGDINTRSLQDPGNSQSSGLS) shows a compositional bias: polar residues.

This is an uncharacterized protein from Rattus norvegicus (Rat).